We begin with the raw amino-acid sequence, 898 residues long: Probable LRR receptor-like serine/threonine-protein kinase At4g20450 (898 aa).

Residues methionine 1–alanine 24 form the signal peptide. Residues glutamine 25–leucine 535 lie on the Extracellular side of the membrane. 10 N-linked (GlcNAc...) asparagine glycosylation sites follow: asparagine 40, asparagine 52, asparagine 98, asparagine 247, asparagine 253, asparagine 420, asparagine 443, asparagine 465, asparagine 484, and asparagine 489. LRR repeat units follow at residues glutamine 455 to methionine 477, leucine 479 to methionine 501, and glycine 505 to threonine 526. The helical transmembrane segment at leucine 536–valine 556 threads the bilayer. Residues asparagine 557–arginine 898 are Cytoplasmic-facing. Phosphothreonine is present on threonine 582. Residues asparagine 591–leucine 864 form the Protein kinase domain. Residues leucine 597 to valine 605 and lysine 619 each bind ATP. The residue at position 664 (tyrosine 664) is a Phosphotyrosine. The active-site Proton acceptor is aspartate 716. Serine 750 is subject to Phosphoserine. A Phosphothreonine modification is found at threonine 751. Residue tyrosine 764 is modified to Phosphotyrosine. Residues leucine 864 to arginine 898 are disordered. Positions asparagine 868–serine 881 are enriched in basic and acidic residues.

Belongs to the protein kinase superfamily. Ser/Thr protein kinase family.

The protein localises to the membrane. The enzyme catalyses L-seryl-[protein] + ATP = O-phospho-L-seryl-[protein] + ADP + H(+). It carries out the reaction L-threonyl-[protein] + ATP = O-phospho-L-threonyl-[protein] + ADP + H(+). In Arabidopsis thaliana (Mouse-ear cress), this protein is Probable LRR receptor-like serine/threonine-protein kinase At4g20450.